The primary structure comprises 289 residues: ADP-dependent (S)-NAD(P)H-hydrate dehydratase (289 aa).

The 278-residue stretch at 9-286 folds into the YjeF C-terminal domain; it reads VTAAALRAQP…PEVPGILDRL (278 aa). The (6S)-NADPHX site is built by A44 and H160. Residues 197 to 201 and G226 each bind AMP; that span reads KGADS. (6S)-NADPHX is bound at residue D227.

It belongs to the NnrD/CARKD family. In terms of assembly, homotetramer. It depends on Mg(2+) as a cofactor.

The catalysed reaction is (6S)-NADHX + ADP = AMP + phosphate + NADH + H(+). The enzyme catalyses (6S)-NADPHX + ADP = AMP + phosphate + NADPH + H(+). Its function is as follows. Catalyzes the dehydration of the S-form of NAD(P)HX at the expense of ADP, which is converted to AMP. Together with NAD(P)HX epimerase, which catalyzes the epimerization of the S- and R-forms, the enzyme allows the repair of both epimers of NAD(P)HX, a damaged form of NAD(P)H that is a result of enzymatic or heat-dependent hydration. This is ADP-dependent (S)-NAD(P)H-hydrate dehydratase from Xanthomonas campestris pv. campestris (strain ATCC 33913 / DSM 3586 / NCPPB 528 / LMG 568 / P 25).